The following is a 127-amino-acid chain: Apolipoprotein C-IV (127 aa).

The signal sequence occupies residues 1–27 (MSLLRNRLQDLPALCLCVLVLACIGAC).

It belongs to the apolipoprotein C4 family.

It is found in the secreted. Functionally, may participate in lipoprotein metabolism. This is Apolipoprotein C-IV (APOC4) from Chlorocebus sabaeus (Green monkey).